The chain runs to 123 residues: Transmembrane protein 254 (123 aa).

At alanine 2 the chain carries N-acetylalanine. The next 3 membrane-spanning stretches (helical) occupy residues 15–35 (LFWF…VFWP), 61–81 (LCNG…YAIV), and 95–115 (LLWF…LIAY).

The protein localises to the membrane. This Pongo abelii (Sumatran orangutan) protein is Transmembrane protein 254 (TMEM254).